Here is a 504-residue protein sequence, read N- to C-terminus: Maturase K (504 aa).

Belongs to the intron maturase 2 family. MatK subfamily.

The protein resides in the plastid. It is found in the chloroplast. Its function is as follows. Usually encoded in the trnK tRNA gene intron. Probably assists in splicing its own and other chloroplast group II introns. This is Maturase K from Barbarea vulgaris (Yellow rocket).